The primary structure comprises 268 residues: Lipase 1 (268 aa).

The first 29 residues, 1–29 (MRRFRLVGFLSSLVLAAGAALTGAATAQA), serve as a signal peptide directing secretion. Ser44 acts as the Nucleophile in catalysis. 3 disulfide bridges follow: Cys61–Cys86, Cys127–Cys135, and Cys185–Cys231. His250 is an active-site residue.

It belongs to the 'GDSL' lipolytic enzyme family. As to quaternary structure, monomer.

The protein localises to the secreted. It catalyses the reaction a triacylglycerol + H2O = a diacylglycerol + a fatty acid + H(+). With respect to regulation, strongly inhibited by Ag(+). The cations Ca(2+), Mg(2+), Co(2+) and Cu(2+) do not significantly reduce the lipolytic activity of SCO1725. Is also inhibited by DTT in vitro, but not by EDTA or by the reagent masking SH-groups, p-hydroxymercuribenzoate (pHMB). Is resistant to PMSF inhibition, except in the presence of Ca(2+). Is also strongly inhibited by 3,4-dichloroisocoumarin (DCI), another inhibitor of serine hydrolases. Addition of tetrahydrofuran and 1,4-dioxane significantly increases (2- and 4- fold, respectively) hydrolytic activity of lipase towards p-nitrophenyl caprylate. Its function is as follows. Catalyzes the hydrolysis of fatty acid esters with a preference for mid-length acyl chain (C10-C16). Is able to hydrolyze the triacylglycerol triolein and mixed triacylglycerols from a wide range of natural oils; better activity is obtained with corn-, wheat germ- and olive oil that have higher content of linoleic and/or oleic acid (C18:2; C18:1, cis). Tween detergents are also substrates for this enzyme. Displays arylesterase activity towards p-nitrophenyl alkanoate esters and alpha- and beta-naphthyl esters. This chain is Lipase 1, found in Streptomyces coelicolor (strain ATCC BAA-471 / A3(2) / M145).